The sequence spans 222 residues: Transmembrane reductase CYB561D2 (222 aa).

The Cytoplasmic segment spans residues 2 to 17 (ALSVETESHIYRALRT). In terms of domain architecture, Cytochrome b561 spans 14-217 (ALRTASGAAA…NQVSNAYLYR (204 aa)). Residues 18–38 (ASGAAAHLVALGFTIFVAVLA) traverse the membrane as a helical segment. Residues 39–46 (RPGSSLFS) are Lumenal-facing. A helical transmembrane segment spans residues 47 to 67 (WHPVLMSLAFSFLMTEALLMF). Heme b is bound at residue His-48. Topologically, residues 68–85 (SPESSLLRSLSRKVRARC) are cytoplasmic. Heme b is bound by residues His-86 and His-120. A helical membrane pass occupies residues 86-106 (HWVLQLLALLCALLGLGLVIL). At 107-122 (HKEQLGKAHLTTRHGQ) the chain is on the lumenal side. The helical transmembrane segment at 123–143 (AGLLAVLWAGLQCSGGMGLLY) threads the bilayer. The Cytoplasmic segment spans residues 144 to 162 (PKLLPRWPLAKLKLYHATS). A heme b-binding site is contributed by His-159. Residues 163 to 183 (GLVGYLLGSASLLLGMFSLWF) form a helical membrane-spanning segment. Residues 184–186 (TAT) are Lumenal-facing. A helical transmembrane segment spans residues 187-207 (VTGGAWYLAVLCPILTSLVIM). Over 208 to 222 (NQVSNAYLYRKRIQP) the chain is Cytoplasmic.

The cofactor is heme b. As to expression, highly expressed in the brain, lung, liver, and kidney. Moderately expressed in the heart, placenta, skeletal muscle, and pancreas.

Its subcellular location is the endoplasmic reticulum membrane. The protein resides in the cytoplasmic vesicle membrane. The enzyme catalyses monodehydro-L-ascorbate radical(out) + L-ascorbate(in) = monodehydro-L-ascorbate radical(in) + L-ascorbate(out). It catalyses the reaction Fe(3+)(out) + L-ascorbate(in) = monodehydro-L-ascorbate radical(in) + Fe(2+)(out) + H(+). Its function is as follows. Transmembrane reductase that may use ascorbate as an electron donor in the cytoplasm and transfer electrons across endoplasmic reticulum membranes to reduce monodehydro-L-ascorbate radical and iron cations Fe(3+) in the lumen of that compartment. This is Transmembrane reductase CYB561D2 from Mus musculus (Mouse).